A 508-amino-acid chain; its full sequence is Catalase (508 aa).

The N-terminal stretch at 1–21 (MHMSKSFLLISMGLASISVHA) is a signal peptide. Catalysis depends on residues His-72 and Asn-145. Heme is bound at residue Tyr-353. The segment covering 373 to 392 (PKSPVANHNQDGPSNNSTGL) has biased composition (polar residues). Positions 373–396 (PKSPVANHNQDGPSNNSTGLGNVD) are disordered.

This sequence belongs to the catalase family. Heme serves as cofactor.

The protein resides in the periplasm. It catalyses the reaction 2 H2O2 = O2 + 2 H2O. Functionally, decomposes hydrogen peroxide into water and oxygen; serves to protect cells from the toxic effects of hydrogen peroxide. The polypeptide is Catalase (Vibrio vulnificus (strain YJ016)).